A 372-amino-acid polypeptide reads, in one-letter code: Queuine tRNA-ribosyltransferase (372 aa).

The Proton acceptor role is filled by Asp92. Substrate is bound by residues 92 to 96, Asp146, Gln188, and Gly215; that span reads DSGGF. An RNA binding region spans residues 246-252; it reads GIGTLRE. Asp265 (nucleophile) is an active-site residue. An RNA binding; important for wobble base 34 recognition region spans residues 270-274; it reads TRLGR. 4 residues coordinate Zn(2+): Cys303, Cys305, Cys308, and His334.

This sequence belongs to the queuine tRNA-ribosyltransferase family. Homodimer. Within each dimer, one monomer is responsible for RNA recognition and catalysis, while the other monomer binds to the replacement base PreQ1. It depends on Zn(2+) as a cofactor.

It catalyses the reaction 7-aminomethyl-7-carbaguanine + guanosine(34) in tRNA = 7-aminomethyl-7-carbaguanosine(34) in tRNA + guanine. Its pathway is tRNA modification; tRNA-queuosine biosynthesis. In terms of biological role, catalyzes the base-exchange of a guanine (G) residue with the queuine precursor 7-aminomethyl-7-deazaguanine (PreQ1) at position 34 (anticodon wobble position) in tRNAs with GU(N) anticodons (tRNA-Asp, -Asn, -His and -Tyr). Catalysis occurs through a double-displacement mechanism. The nucleophile active site attacks the C1' of nucleotide 34 to detach the guanine base from the RNA, forming a covalent enzyme-RNA intermediate. The proton acceptor active site deprotonates the incoming PreQ1, allowing a nucleophilic attack on the C1' of the ribose to form the product. After dissociation, two additional enzymatic reactions on the tRNA convert PreQ1 to queuine (Q), resulting in the hypermodified nucleoside queuosine (7-(((4,5-cis-dihydroxy-2-cyclopenten-1-yl)amino)methyl)-7-deazaguanosine). This chain is Queuine tRNA-ribosyltransferase, found in Prochlorococcus marinus (strain MIT 9313).